The following is a 201-amino-acid chain: Recombination protein RecR (201 aa).

Residues 60-75 (CSVCGNVDTIDPCSIC) form a C4-type zinc finger. The Toprim domain occupies 83–178 (ATIIVVEDIA…KVTRLAHGVP (96 aa)).

It belongs to the RecR family.

May play a role in DNA repair. It seems to be involved in an RecBC-independent recombinational process of DNA repair. It may act with RecF and RecO. The polypeptide is Recombination protein RecR (Bartonella henselae (strain ATCC 49882 / DSM 28221 / CCUG 30454 / Houston 1) (Rochalimaea henselae)).